We begin with the raw amino-acid sequence, 592 residues long: Keratin, type II cytoskeletal 5 (592 aa).

Residues methionine 1–serine 18 are compositionally biased toward low complexity. Residues methionine 1–alanine 20 form a disordered region. A head region spans residues methionine 1–glutamate 169. Serine 5, serine 8, serine 16, and serine 21 each carry phosphoserine. Position 24 is a phosphothreonine; by CDK1 (threonine 24). Residues serine 26, serine 36, serine 50, serine 64, serine 71, serine 75, and serine 82 each carry the phosphoserine modification. A Phosphothreonine; by CDK1 modification is found at threonine 153. Position 168 is a phosphothreonine; by AURKB (threonine 168). The segment at glutamate 170–leucine 205 is coil 1A. An IF rod domain is found at glutamate 170–leucine 483. A linker 1 region spans residues glutamine 206 to tyrosine 224. The interval isoleucine 225–glutamine 317 is coil 1B. The interval threonine 318–isoleucine 340 is linker 12. Residues isoleucine 341 to glutamate 479 form a coil 2 region. Positions glutamate 480–serine 592 are tail. Positions glycine 568 to serine 592 are disordered. The segment covering serine 574–serine 592 has biased composition (low complexity).

This sequence belongs to the intermediate filament family. Heterodimer of a type I and a type II keratin. Heterodimer with type I keratin KRT25 leading to the formation of keratin intermediate filament (KIF) network. Forms a heterodimer (via 2B domains) with KRT14 (via 2B domains). Interacts with TCHP. Interacts with EPPK1. Interacts with AMELX. Interacts with PKP1 (via N-terminus) and PKP2. In terms of processing, phosphorylated by CDK1, AURKB and Rho-kinase, phosphorylation is regulated by the cell cycle. Thr-24 phosphorylation, mediated by CDK1, peaks during prometaphase or metaphase cells with phosphorylated filamentous structures evident throughout the cytoplasm during early mitosis. CDK1 phosphorylates Thr-24 in mitotic cells at the site of injury. O-glycosylated.

It localises to the cytoplasm. Required for the formation of keratin intermediate filaments in the basal epidermis and maintenance of the skin barrier in response to mechanical stress. Regulates the recruitment of Langerhans cells to the epidermis, potentially by modulation of the abundance of macrophage chemotactic cytokines, macrophage inflammatory cytokines and CTNND1 localization in keratinocytes. This is Keratin, type II cytoskeletal 5 (KRT5) from Pan troglodytes (Chimpanzee).